The primary structure comprises 333 residues: Receptor polysaccharide phosphotransferase WefC (333 aa).

It belongs to the stealth family.

Functionally, part of the type 2Gn receptor polysaccharide (RPS) biosynthesis locus. Essential for cell surface RPS production, and for synthesis of the host-like GalNAc beta 1-3Gal (Gn) motif of the RPS. Probably encodes a 1-3Gal alpha transferase. The chain is Receptor polysaccharide phosphotransferase WefC (wefC) from Streptococcus gordonii.